A 2073-amino-acid polypeptide reads, in one-letter code: Dedicator of cytokinesis protein 11 (2073 aa).

Phosphoserine is present on Ser-12. Thr-16 is subject to Phosphothreonine. Residues Ser-23 and Ser-161 each carry the phosphoserine modification. The 108-residue stretch at 165 to 272 folds into the PH domain; the sequence is GVIKQGWLHK…WLIMLKKIIQ (108 aa). Tyr-248 is modified (phosphotyrosine). Phosphoserine occurs at positions 306 and 445. The C2 DOCK-type domain maps to 640–818; it reads KNHLYVYPLQ…PLLKIKTHLE (179 aa). Positions 1227 to 1267 are disordered; sequence QNGHGIKREDSRGSLIPEGATGFPDPGSTSENTRQSSSRSS. Ser-1237 and Ser-1240 each carry phosphoserine. The segment covering 1254–1267 has biased composition (low complexity); that stretch reads STSENTRQSSSRSS. Residues 1609 to 2036 form the DOCKER domain; it reads KSYASTPELR…LSDIIHEQIL (428 aa).

This sequence belongs to the DOCK family. In terms of assembly, interacts with CDC42. In terms of tissue distribution, expressed in spleen, thymus, mesenteric lymph nodes (MLN), bone marrow and peripheral blood lymphocytes. Enriched in B-cells from germinal centers. Expressed in B-, T- and dendritic cells as well as Purkinje cells.

In terms of biological role, guanine nucleotide-exchange factor (GEF) that activates CDC42 by exchanging bound GDP for free GTP. Required for marginal zone (MZ) B-cell development, is associated with early bone marrow B-cell development, MZ B-cell formation, MZ B-cell number and marginal metallophilic macrophages morphology. Facilitates filopodia formation through the activation of CDC42. The polypeptide is Dedicator of cytokinesis protein 11 (Mus musculus (Mouse)).